Reading from the N-terminus, the 510-residue chain is Bifunctional purine biosynthesis protein PurH (510 aa).

Residues 1-143 (MTKRALISVS…KNHSGVLVLV (143 aa)) enclose the MGS-like domain.

This sequence belongs to the PurH family.

The catalysed reaction is (6R)-10-formyltetrahydrofolate + 5-amino-1-(5-phospho-beta-D-ribosyl)imidazole-4-carboxamide = 5-formamido-1-(5-phospho-D-ribosyl)imidazole-4-carboxamide + (6S)-5,6,7,8-tetrahydrofolate. It carries out the reaction IMP + H2O = 5-formamido-1-(5-phospho-D-ribosyl)imidazole-4-carboxamide. Its pathway is purine metabolism; IMP biosynthesis via de novo pathway; 5-formamido-1-(5-phospho-D-ribosyl)imidazole-4-carboxamide from 5-amino-1-(5-phospho-D-ribosyl)imidazole-4-carboxamide (10-formyl THF route): step 1/1. It participates in purine metabolism; IMP biosynthesis via de novo pathway; IMP from 5-formamido-1-(5-phospho-D-ribosyl)imidazole-4-carboxamide: step 1/1. The chain is Bifunctional purine biosynthesis protein PurH from Deinococcus deserti (strain DSM 17065 / CIP 109153 / LMG 22923 / VCD115).